The chain runs to 79 residues: Conotoxin Cl9.4 (79 aa).

Positions 1-23 (MNCYLILTVALLLTSAMTGTTTA) are cleaved as a signal peptide. Positions 24–37 (GQLNKKGVTLREDD) are excised as a propeptide. Cystine bridges form between Cys-41–Cys-58, Cys-46–Cys-68, and Cys-48–Cys-73.

Expressed by the venom duct.

The protein localises to the secreted. In Californiconus californicus (California cone), this protein is Conotoxin Cl9.4.